The chain runs to 141 residues: MQLTSFTDYGLRALIYMASLPEGRMTSISEVTDVYGVSRNHMVKIINQLSRAGYVTAVRGKNGGIRLGKSASAIRIGDVVRELEPLSLVNCSSEFCHITPACRLKQALSKAVQSFLTELDNYTLADLVEENQPLYKLLLVE.

The HTH rrf2-type domain occupies 2–129 (QLTSFTDYGL…DNYTLADLVE (128 aa)). The H-T-H motif DNA-binding region spans 28 to 51 (ISEVTDVYGVSRNHMVKIINQLSR). [2Fe-2S] cluster-binding residues include C91, C96, and C102.

The cofactor is [2Fe-2S] cluster.

Nitric oxide-sensitive repressor of genes involved in protecting the cell against nitrosative stress. May require iron for activity. The polypeptide is HTH-type transcriptional repressor NsrR (Escherichia coli O139:H28 (strain E24377A / ETEC)).